A 72-amino-acid chain; its full sequence is Large ribosomal subunit protein bL31 (72 aa).

Zn(2+)-binding residues include Cys16, Cys18, Cys37, and Cys40.

The protein belongs to the bacterial ribosomal protein bL31 family. Type A subfamily. As to quaternary structure, part of the 50S ribosomal subunit. Zn(2+) is required as a cofactor.

In terms of biological role, binds the 23S rRNA. In Buchnera aphidicola subsp. Acyrthosiphon pisum (strain Tuc7), this protein is Large ribosomal subunit protein bL31.